The chain runs to 353 residues: Protein RecA (353 aa).

Gly67 to Thr74 provides a ligand contact to ATP.

The protein belongs to the RecA family.

It is found in the cytoplasm. Its function is as follows. Can catalyze the hydrolysis of ATP in the presence of single-stranded DNA, the ATP-dependent uptake of single-stranded DNA by duplex DNA, and the ATP-dependent hybridization of homologous single-stranded DNAs. It interacts with LexA causing its activation and leading to its autocatalytic cleavage. This is Protein RecA from Shewanella woodyi (strain ATCC 51908 / MS32).